Reading from the N-terminus, the 596-residue chain is Mitoguardin 2 (596 aa).

The next 2 helical transmembrane spans lie at 11-31 (IMQA…STFG) and 40-60 (LSPS…ALAL). Disordered regions lie at residues 67–158 (RRGR…AAWE) and 576–596 (ALPK…GQQD). Residues 110 to 123 (MSPSTRSNDTLSGV) are compositionally biased toward polar residues. Over residues 124–140 (SSIAQSKHSSSSHSIAS) the composition is skewed to low complexity. 2 stretches are compositionally biased toward polar residues: residues 143–152 (VPSSPNQSVN) and 583–596 (QAES…GQQD).

It belongs to the mitoguardin family. As to quaternary structure, homodimer and heterodimer; forms heterodimers with miga1.

It is found in the mitochondrion outer membrane. Its function is as follows. Regulator of mitochondrial fusion: acts by forming homo- and heterodimers at the mitochondrial outer membrane and facilitating the formation of pld6/MitoPLD dimers. May act by regulating phospholipid metabolism via pld6/MitoPLD. This Danio rerio (Zebrafish) protein is Mitoguardin 2.